The primary structure comprises 607 residues: UvrABC system protein C (607 aa).

The GIY-YIG domain maps to 16–94 (ARPGVYRMFD…IKQWRPPYNI (79 aa)). Residues 203 to 238 (QQLGNELNAEMEKAAMALNFEKAAELRDQIALLRRV) form the UVR domain.

It belongs to the UvrC family. Interacts with UvrB in an incision complex.

It is found in the cytoplasm. The UvrABC repair system catalyzes the recognition and processing of DNA lesions. UvrC both incises the 5' and 3' sides of the lesion. The N-terminal half is responsible for the 3' incision and the C-terminal half is responsible for the 5' incision. This Pseudomonas putida (strain W619) protein is UvrABC system protein C.